The primary structure comprises 304 residues: Cell division protein ZipA (304 aa).

Topologically, residues 1 to 5 (MQDLR) are periplasmic. A helical membrane pass occupies residues 6–26 (LILIVVGAIAIIALLLHGLWT). Residues 27-304 (SRKERSSVFR…IRDVIDANSH (278 aa)) are Cytoplasmic-facing. The interval 31 to 165 (RSSVFRDRPH…PEPQSQPKQK (135 aa)) is disordered. Over residues 121-132 (ARPETHKPDQPE) the composition is skewed to basic and acidic residues. Residues 137 to 158 (AAPAAAETAPAPAEPAQKTPEP) show a composition bias toward low complexity.

This sequence belongs to the ZipA family. Interacts with FtsZ via their C-terminal domains.

Its subcellular location is the cell inner membrane. In terms of biological role, essential cell division protein that stabilizes the FtsZ protofilaments by cross-linking them and that serves as a cytoplasmic membrane anchor for the Z ring. Also required for the recruitment to the septal ring of downstream cell division proteins. In Erwinia tasmaniensis (strain DSM 17950 / CFBP 7177 / CIP 109463 / NCPPB 4357 / Et1/99), this protein is Cell division protein ZipA.